The sequence spans 337 residues: Anthranilate phosphoribosyltransferase (337 aa).

Residues G81, 84 to 85, S89, 91 to 94, 109 to 117, and A121 each bind 5-phospho-alpha-D-ribose 1-diphosphate; these read GD, NVST, and KHGNRAASS. Residue G81 coordinates anthranilate. Residue S93 participates in Mg(2+) binding. N112 contributes to the anthranilate binding site. Residue R167 coordinates anthranilate. D226 and E227 together coordinate Mg(2+).

This sequence belongs to the anthranilate phosphoribosyltransferase family. As to quaternary structure, homodimer. It depends on Mg(2+) as a cofactor.

It carries out the reaction N-(5-phospho-beta-D-ribosyl)anthranilate + diphosphate = 5-phospho-alpha-D-ribose 1-diphosphate + anthranilate. It participates in amino-acid biosynthesis; L-tryptophan biosynthesis; L-tryptophan from chorismate: step 2/5. Its function is as follows. Catalyzes the transfer of the phosphoribosyl group of 5-phosphorylribose-1-pyrophosphate (PRPP) to anthranilate to yield N-(5'-phosphoribosyl)-anthranilate (PRA). This is Anthranilate phosphoribosyltransferase from Methylobacterium sp. (strain 4-46).